Consider the following 335-residue polypeptide: Phosphoserine phosphatase RsbU (335 aa).

The 211-residue stretch at 123–333 folds into the PPM-type phosphatase domain; that stretch reads DIGAISVPAK…DDFTLIVLRR (211 aa).

The enzyme catalyses O-phospho-L-serine + H2O = L-serine + phosphate. It carries out the reaction O-phospho-D-serine + H2O = D-serine + phosphate. Its activity is regulated as follows. Stimulated by a long-lived interaction with RsbT. Its function is as follows. Positive regulator of sigma-B activity. Dephosphorylates RsbV in response to environmental stress conveyed from the RsbXST module. The protein is Phosphoserine phosphatase RsbU (rsbU) of Bacillus subtilis (strain 168).